A 358-amino-acid polypeptide reads, in one-letter code: CCAAT/enhancer-binding protein alpha (358 aa).

The segment at 1 to 55 (MESADFYEAEPRPPMSSHLQSPPHAPSSAAFGFPRGAGPAQPPAPPAAPEPLGGI) is disordered. The required to repress E2F1:TFDP1-mediated transcription, to inhibit cell cycle and to induce adipocyte differentiation stretch occupies residues 1-70 (MESADFYEAE…SIDISAYIDP (70 aa)). The segment covering 29 to 39 (AAFGFPRGAGP) has biased composition (low complexity). The span at 40–49 (AQPPAPPAAP) shows a compositional bias: pro residues. The tract at residues 54–72 (GICEHETSIDISAYIDPAA) is required for interaction with TRIB1. The tract at residues 128–204 (PPGYGCAAAG…HPPPAHLAAP (77 aa)) is required to induce adipocyte differentiation. Lys-161 bears the N6-acetyllysine; alternate mark. A Glycyl lysine isopeptide (Lys-Gly) (interchain with G-Cter in SUMO2); alternate cross-link involves residue Lys-161. Disordered stretches follow at residues 178–201 (LFPY…PAHL) and 217–291 (TMHL…RRER). 2 stretches are compositionally biased toward pro residues: residues 181-199 (YQPP…PPPA) and 224-238 (HPTP…PHPA). The interval 182–198 (QPPPPPPPSHPHPHPPP) is required to functionally cooperate with SREBF1 in promoter activation. Position 190 is a phosphoserine (Ser-190). Residues Thr-226 and Thr-230 each carry the phosphothreonine; by GSK3 modification. Ser-234 is modified (phosphoserine; by GSK3). The segment covering 239 to 259 (PALGAAGLPGPGSALKGLGAA) has biased composition (low complexity). An interaction with FOXO1 region spans residues 244–358 (AGLPGPGSAL…SLVKAMGNCA (115 aa)). Over residues 276–291 (KSVDKNSNEYRVRRER) the composition is skewed to basic and acidic residues. Positions 282 to 345 (SNEYRVRRER…DTLRGIFRQL (64 aa)) constitute a bZIP domain. Residues 285–300 (YRVRRERNNIAVRKSR) mediate DNA binding. The tract at residues 286–313 (RVRRERNNIAVRKSRDKAKQRNVETQQK) is basic motif. Positions 317 to 345 (LTSDNDRLRKRVEQLSRELDTLRGIFRQL) are leucine-zipper.

The protein belongs to the bZIP family. C/EBP subfamily. As to quaternary structure, binds DNA as a homodimer and as a heterodimer. Can form stable heterodimers with CEBPB, CEBPD, CEBPE and CEBPG. Interacts with PRDM16. Interacts with UBN1. Interacts with ZNF638; this interaction increases transcriptional activation. Interacts with the complex TFDP2:E2F1; the interaction prevents CEBPA binding to target gene promoters and represses its transcriptional activity. Interacts with RB1. Interacts (when phosphorylated at Ser-190) with CDK2, CDK4, E2F4 and SMARCA2. Interacts with SREBPF1. Interacts with FOXO1 (via the Fork-head domain); the interaction increases when FOXO1 is deacetylated. Interacts with SIX1. Interacts (via recognition sequence) with TRIB1. Interacts (via bZIP domain) with OVOL2 (via zinc-finger domains); the interaction inhibits the transcription factor activity of CEBPA and is required to repress adipogenesis. In terms of assembly, interacts with TAF1A and UBTF. Interacts with TAF1A and UBTF. Interacts with NPM1. As to quaternary structure, (Microbial infection) Interacts with HBV protein X. In terms of assembly, (Microbial infection) Interacts with Epstein-Barr virus lytic switch protein BZLF1; this interaction induces G1 cell cycle arrest. Phosphorylation at Ser-190 is required for interaction with CDK2, CDK4 and SWI/SNF complex leading to cell cycle inhibition. Dephosphorylated at Ser-190 by protein phosphatase 2A (PP2A) through PI3K/AKT signaling pathway regulation. Phosphorylation at Thr-226 and Thr-230 by GSK3 is constitutive in adipose tissue and lung. In liver, both Thr-226 and Thr-230 are phosphorylated only during feeding but not during fasting. Phosphorylation of the GSK3 consensus sites selectively decreases transactivation activity on IRE-controlled promoters. Post-translationally, sumoylated, sumoylation blocks the inhibitory effect on cell proliferation by disrupting the interaction with SMARCA2. In terms of processing, ubiquitinated by COP1 upon interaction with TRIB1.

Its subcellular location is the nucleus. The protein resides in the nucleolus. Functionally, transcription factor that coordinates proliferation arrest and the differentiation of myeloid progenitors, adipocytes, hepatocytes, and cells of the lung and the placenta. Binds directly to the consensus DNA sequence 5'-T[TG]NNGNAA[TG]-3' acting as an activator on distinct target genes. During early embryogenesis, plays essential and redundant functions with CEBPB. Essential for the transition from common myeloid progenitors (CMP) to granulocyte/monocyte progenitors (GMP). Critical for the proper development of the liver and the lung. Necessary for terminal adipocyte differentiation, is required for postnatal maintenance of systemic energy homeostasis and lipid storage. To regulate these different processes at the proper moment and tissue, interplays with other transcription factors and modulators. Down-regulates the expression of genes that maintain cells in an undifferentiated and proliferative state through E2F1 repression, which is critical for its ability to induce adipocyte and granulocyte terminal differentiation. Reciprocally E2F1 blocks adipocyte differentiation by binding to specific promoters and repressing CEBPA binding to its target gene promoters. Proliferation arrest also depends on a functional binding to SWI/SNF complex. In liver, regulates gluconeogenesis and lipogenesis through different mechanisms. To regulate gluconeogenesis, functionally cooperates with FOXO1 binding to IRE-controlled promoters and regulating the expression of target genes such as PCK1 or G6PC1. To modulate lipogenesis, interacts and transcriptionally synergizes with SREBF1 in promoter activation of specific lipogenic target genes such as ACAS2. In adipose tissue, seems to act as FOXO1 coactivator accessing to ADIPOQ promoter through FOXO1 binding sites. Can act as dominant-negative. Binds DNA and have transctivation activity, even if much less efficiently than isoform 2. Does not inhibit cell proliferation. Its function is as follows. Directly and specifically enhances ribosomal DNA transcription interacting with RNA polymerase I-specific cofactors and inducing histone acetylation. The polypeptide is CCAAT/enhancer-binding protein alpha (Homo sapiens (Human)).